Consider the following 167-residue polypeptide: Elafin (167 aa).

A signal peptide spans 1-21; sequence MRSRSFLVLVVVFLICGTLVA. Residues 22–70 constitute a propeptide that is removed on maturation; that stretch reads QAAGRIRRPKGKGTKKILALVKGQGPVRGKDQVKGQGPVKGQDLGKSQD. 12 repeat units span residues 44-49, 50-55, 56-61, 62-67, 68-73, 74-79, 80-85, 86-91, 92-97, 98-103, 104-109, and 110-115. Residues 44-115 are 12 X 6 AA tandem repeats of [GSAL]-[QEK]-[DGLP]-[APSLQ]-[VGDFI]-[KR]; the sequence is GQGPVRGKDQ…DPVKAQPAIK (72 aa). Residues 46–104 form a disordered region; the sequence is GPVRGKDQVKGQGPVKGQDLGKSQDPVKAQLPDKGQDLGKGEDSVKGQDPFKAQLPDKL. Positions 78–126 are 2 X tandem repeats of SVP-1 like motif; sequence DKGQDLGKGEDSVKGQDPFKAQLPDKLQDPVKAQPAIKRLILLTKPGSC. A compositionally biased stretch (basic and acidic residues) spans 79-91; the sequence is KGQDLGKGEDSVK. SVP-1 clotting repeat units follow at residues 80-101 and 104-126; these read GQDL…AQLP and LQDP…PGSC. The WAP domain maps to 119–167; it reads LLTKPGSCPRILIRCLMVNPPNRCLSDAQCPGLKKCCEGFCGKACMDPK. 4 disulfide bridges follow: Cys-126/Cys-155, Cys-133/Cys-159, Cys-142/Cys-154, and Cys-148/Cys-163.

Trachea and large intestine.

Its function is as follows. Neutrophil and pancreatic elastase-specific inhibitor of skin. It may prevent elastase-mediated tissue proteolysis. This is Elafin from Sus scrofa (Pig).